Consider the following 150-residue polypeptide: Ribonuclease pancreatic delta-type (150 aa).

Residues 1 to 25 form the signal peptide; that stretch reads MGLEKSFILFSLLVLVLGWVQPSLG. Arg35 is a substrate binding site. His37 (proton acceptor) is an active-site residue. Intrachain disulfides connect Cys51–Cys110, Cys65–Cys121, and Cys83–Cys136. Residues 66–70, Lys91, and Arg111 contribute to the substrate site; that span reads KRVNT. The active-site Proton donor is the His145.

The protein belongs to the pancreatic ribonuclease family. In terms of assembly, monomer.

The protein resides in the secreted. The catalysed reaction is an [RNA] containing cytidine + H2O = an [RNA]-3'-cytidine-3'-phosphate + a 5'-hydroxy-ribonucleotide-3'-[RNA].. It carries out the reaction an [RNA] containing uridine + H2O = an [RNA]-3'-uridine-3'-phosphate + a 5'-hydroxy-ribonucleotide-3'-[RNA].. In terms of biological role, endonuclease that catalyzes the cleavage of RNA on the 3' side of pyrimidine nucleotides. Acts on single-stranded and double-stranded RNA. This is Ribonuclease pancreatic delta-type from Rattus rattus (Black rat).